We begin with the raw amino-acid sequence, 73 residues long: Translation initiation factor IF-1 (73 aa).

The region spanning 1–73 (MSKKKDVIEM…TRGRITYRYK (73 aa)) is the S1-like domain.

Belongs to the IF-1 family. Component of the 30S ribosomal translation pre-initiation complex which assembles on the 30S ribosome in the order IF-2 and IF-3, IF-1 and N-formylmethionyl-tRNA(fMet); mRNA recruitment can occur at any time during PIC assembly.

It localises to the cytoplasm. Its function is as follows. One of the essential components for the initiation of protein synthesis. Stabilizes the binding of IF-2 and IF-3 on the 30S subunit to which N-formylmethionyl-tRNA(fMet) subsequently binds. Helps modulate mRNA selection, yielding the 30S pre-initiation complex (PIC). Upon addition of the 50S ribosomal subunit IF-1, IF-2 and IF-3 are released leaving the mature 70S translation initiation complex. The protein is Translation initiation factor IF-1 of Roseiflexus castenholzii (strain DSM 13941 / HLO8).